The sequence spans 114 residues: UPF0342 protein NT01CX_2274 (114 aa).

Belongs to the UPF0342 family.

In Clostridium novyi (strain NT), this protein is UPF0342 protein NT01CX_2274.